The chain runs to 276 residues: Rhamnulose-1-phosphate aldolase (276 aa).

The active site involves Glu117. Zn(2+)-binding residues include His141, His143, and His212.

It belongs to the aldolase class II family. RhaD subfamily. As to quaternary structure, homotetramer. Requires Zn(2+) as cofactor.

It is found in the cytoplasm. It catalyses the reaction L-rhamnulose 1-phosphate = (S)-lactaldehyde + dihydroxyacetone phosphate. It participates in carbohydrate degradation; L-rhamnose degradation; glycerone phosphate from L-rhamnose: step 3/3. Functionally, catalyzes the reversible cleavage of L-rhamnulose-1-phosphate to dihydroxyacetone phosphate (DHAP) and L-lactaldehyde. The protein is Rhamnulose-1-phosphate aldolase of Klebsiella pneumoniae (strain 342).